The following is a 441-amino-acid chain: Probable magnesium transporter NIPA8 (441 aa).

Topologically, residues 1–4 (MGEW) are extracellular. The helical transmembrane segment at 5 to 25 (VIGAFINIFGSVAINFGTNLL) threads the bilayer. Residues 26-56 (KLGHNERERLALQDGGGKMPLKPIIHNQTWR) are Cytoplasmic-facing. Residues 57-77 (VGILVFLLGNCLNFISFGYAA) form a helical membrane-spanning segment. The Extracellular portion of the chain corresponds to 78-79 (QS). Residues 80–100 (LLAALGSIQFVSNIAFAYVVL) traverse the membrane as a helical segment. Residues 101-105 (NKMVT) are Cytoplasmic-facing. The chain crosses the membrane as a helical span at residues 106-126 (VKVLVATAFIVLGNVFLVAFG). The Extracellular portion of the chain corresponds to 127–144 (NHQSPVFTPEQLAEKYSN). The chain crosses the membrane as a helical span at residues 145 to 165 (VTFLVYCGILILIVAVHHFLY). Residues 166–184 (RKGEVLISTPGQEISSYWK) are Cytoplasmic-facing. A helical transmembrane segment spans residues 185–205 (MLLPFSYAVVSGAIGSCSVLF). At 206 to 222 (AKSLSNLLRLAMSSSYQ) the chain is on the extracellular side. Residues 223 to 243 (LHSWFTYSMLLLFLSTAGFWM) traverse the membrane as a helical segment. Residues 244–255 (TRLNEGLSLYDA) are Cytoplasmic-facing. A helical transmembrane segment spans residues 256–276 (ILIVPMFQIAWTFFSICTGCI). Over 277-288 (YFQEFQVFDALR) the chain is Extracellular. A helical membrane pass occupies residues 289 to 309 (TTMFILGMMCVFIGISLLAPD). At 310-441 (DTRGNETKDN…MLEKTISSKA (132 aa)) the chain is on the cytoplasmic side. A disordered region spans residues 313-347 (GNETKDNSSSLDSIVSSSVPTEEDRLIPQSSEDGH). A compositionally biased stretch (low complexity) spans 320-330 (SSSLDSIVSSS). Residues 334 to 347 (EEDRLIPQSSEDGH) are compositionally biased toward basic and acidic residues.

It belongs to the NIPA (TC 2.A.7) family. In terms of assembly, homodimer.

The protein localises to the cell membrane. It localises to the early endosome. Functionally, acts as a Mg(2+) transporter. Can also transport other divalent cations such as Fe(2+), Sr(2+), Ba(2+), Mn(2+) and Co(2+) but to a much less extent than Mg(2+). The protein is Probable magnesium transporter NIPA8 of Arabidopsis thaliana (Mouse-ear cress).